A 109-amino-acid chain; its full sequence is Ig kappa chain V region K16-167 (109 aa).

The tract at residues 1 to 23 is framework-1; the sequence is ALVMTQTPSPVSAAVGGTVTISC. Positions 24–35 are complementarity-determining-1; it reads QASQSVYSNNLS. The segment at 36–50 is framework-2; that stretch reads WFQQKPGQPPKLLIY. A complementarity-determining-2 region spans residues 51-57; the sequence is KASTLAS. The interval 58 to 89 is framework-3; the sequence is GVPSRFKGSGSGTQFTLPISGVECDDAATYYC. The complementarity-determining-3 stretch occupies residues 90-99; the sequence is QGTNTGNNIV. Residues 100–109 form a framework-4 region; that stretch reads FGTGTEVVVK.

This is Ig kappa chain V region K16-167 from Oryctolagus cuniculus (Rabbit).